The chain runs to 284 residues: 4-hydroxybenzoate octaprenyltransferase (284 aa).

7 helical membrane-spanning segments follow: residues 33–53 (VIAA…LGVF), 93–113 (IGLF…MNPL), 136–156 (HIPQ…AWAA), 159–179 (GELP…TIAY), 209–229 (LIIG…GQFY), 235–252 (YYWT…QQHL), and 264–284 (AFLN…VAFW).

The protein belongs to the UbiA prenyltransferase family. It depends on Mg(2+) as a cofactor.

The protein localises to the cell inner membrane. The enzyme catalyses all-trans-octaprenyl diphosphate + 4-hydroxybenzoate = 4-hydroxy-3-(all-trans-octaprenyl)benzoate + diphosphate. It participates in cofactor biosynthesis; ubiquinone biosynthesis. In terms of biological role, catalyzes the prenylation of para-hydroxybenzoate (PHB) with an all-trans polyprenyl group. Mediates the second step in the final reaction sequence of ubiquinone-8 (UQ-8) biosynthesis, which is the condensation of the polyisoprenoid side chain with PHB, generating the first membrane-bound Q intermediate 3-octaprenyl-4-hydroxybenzoate. This Vibrio parahaemolyticus serotype O3:K6 (strain RIMD 2210633) protein is 4-hydroxybenzoate octaprenyltransferase.